We begin with the raw amino-acid sequence, 524 residues long: AAA ATPase forming ring-shaped complexes (524 aa).

The disordered stretch occupies residues 1 to 29 (MGMGQEKHTDAASQSRDPEAVAAHENDQL). Positions 22 to 59 (AAHENDQLRQRNHALAKALTRATEELRKAKAQLEQFMA) form a coiled coil. Position 250–255 (250–255 (GNGKTL)) interacts with ATP.

Belongs to the AAA ATPase family. In terms of assembly, homohexamer. Assembles into a hexameric ring structure.

The polypeptide is AAA ATPase forming ring-shaped complexes (Bifidobacterium animalis subsp. lactis (strain BB-12)).